Reading from the N-terminus, the 286-residue chain is Shikimate dehydrogenase (NADP(+)) (286 aa).

Residues 20-22 (SLS) and serine 67 each bind shikimate. The active-site Proton acceptor is lysine 71. Shikimate contacts are provided by asparagine 92 and aspartate 107. NADP(+) contacts are provided by residues 131–135 (GGGGA) and alanine 230. Tyrosine 232 provides a ligand contact to shikimate. Glycine 253 lines the NADP(+) pocket.

Belongs to the shikimate dehydrogenase family. As to quaternary structure, homodimer.

The catalysed reaction is shikimate + NADP(+) = 3-dehydroshikimate + NADPH + H(+). It functions in the pathway metabolic intermediate biosynthesis; chorismate biosynthesis; chorismate from D-erythrose 4-phosphate and phosphoenolpyruvate: step 4/7. Involved in the biosynthesis of the chorismate, which leads to the biosynthesis of aromatic amino acids. Catalyzes the reversible NADPH linked reduction of 3-dehydroshikimate (DHSA) to yield shikimate (SA). This chain is Shikimate dehydrogenase (NADP(+)), found in Lactococcus lactis subsp. lactis (strain IL1403) (Streptococcus lactis).